A 246-amino-acid chain; its full sequence is DNA repair protein RecO (246 aa).

Belongs to the RecO family.

Its function is as follows. Involved in DNA repair and RecF pathway recombination. This Nitrosococcus oceani (strain ATCC 19707 / BCRC 17464 / JCM 30415 / NCIMB 11848 / C-107) protein is DNA repair protein RecO.